Consider the following 169-residue polypeptide: Lipoprotein signal peptidase (169 aa).

4 helical membrane passes run 10–30, 41–61, 68–88, and 94–114; these read LPWL…KAFF, VVIP…AFSF, WQRW…VVWL, and GETW…GNLY. Catalysis depends on residues aspartate 124 and aspartate 143. Residues 135-155 traverse the membrane as a helical segment; it reads YFPAFNLADSAITVGAVMLAL.

The protein belongs to the peptidase A8 family.

The protein resides in the cell inner membrane. The catalysed reaction is Release of signal peptides from bacterial membrane prolipoproteins. Hydrolyzes -Xaa-Yaa-Zaa-|-(S,diacylglyceryl)Cys-, in which Xaa is hydrophobic (preferably Leu), and Yaa (Ala or Ser) and Zaa (Gly or Ala) have small, neutral side chains.. It functions in the pathway protein modification; lipoprotein biosynthesis (signal peptide cleavage). This protein specifically catalyzes the removal of signal peptides from prolipoproteins. The chain is Lipoprotein signal peptidase from Pseudomonas paraeruginosa (strain DSM 24068 / PA7) (Pseudomonas aeruginosa (strain PA7)).